Here is an 880-residue protein sequence, read N- to C-terminus: Leucine--tRNA ligase (880 aa).

Positions 46 to 56 (PYPSGALHMGH) match the 'HIGH' region motif. The disordered stretch occupies residues 483 to 502 (SPIKTEPTWRQTTCPDCGGP). The 'KMSKS' region motif lies at 638 to 642 (KMSKS). K641 lines the ATP pocket.

Belongs to the class-I aminoacyl-tRNA synthetase family.

The protein resides in the cytoplasm. The enzyme catalyses tRNA(Leu) + L-leucine + ATP = L-leucyl-tRNA(Leu) + AMP + diphosphate. The polypeptide is Leucine--tRNA ligase (Xanthomonas oryzae pv. oryzae (strain PXO99A)).